A 251-amino-acid polypeptide reads, in one-letter code: Endoglucanase CX (251 aa).

The protein belongs to the glycosyl hydrolase 9 (cellulase E) family.

The catalysed reaction is Endohydrolysis of (1-&gt;4)-beta-D-glucosidic linkages in cellulose, lichenin and cereal beta-D-glucans.. Its function is as follows. Degrades carboxymethylcellulose (CMC). This chain is Endoglucanase CX, found in Prunus persica (Peach).